A 324-amino-acid polypeptide reads, in one-letter code: Methenyltetrahydromethanopterin cyclohydrolase (324 aa).

Belongs to the MCH family.

Its subcellular location is the cytoplasm. It carries out the reaction 5,10-methenyl-5,6,7,8-tetrahydromethanopterin + H2O = N(5)-formyl-5,6,7,8-tetrahydromethanopterin + H(+). The protein operates within one-carbon metabolism; formaldehyde degradation; formate from formaldehyde (H(4)MPT route): step 3/5. In terms of biological role, catalyzes the hydrolysis of methenyl-H(4)MPT(+) to 5-formyl-H(4)MPT. In Methylobacterium sp. (strain 4-46), this protein is Methenyltetrahydromethanopterin cyclohydrolase.